The primary structure comprises 156 residues: Small ribosomal subunit protein uS7 (156 aa).

The protein belongs to the universal ribosomal protein uS7 family. Part of the 30S ribosomal subunit. Contacts proteins S9 and S11.

Functionally, one of the primary rRNA binding proteins, it binds directly to 16S rRNA where it nucleates assembly of the head domain of the 30S subunit. Is located at the subunit interface close to the decoding center, probably blocks exit of the E-site tRNA. The sequence is that of Small ribosomal subunit protein uS7 from Xanthobacter autotrophicus (strain ATCC BAA-1158 / Py2).